The sequence spans 346 residues: MAAGDNKLQALQQALNSIEKAFGKGSIMRLGEASAKLLVEVIPTGSIALDMALGIGGVPRGRIVEVYGPESSGKTTVALHIIAEAQKMGGMAAFIDAEHALDPVYARNLGVDIDNLLVSQPDTGEQALEICEALVRSGAIDVVVIDSVAALVPKAEIDGEMGDAHVGLQARLMSQALRKLTGVVSKSKTCCLFINQIREKVGVMFGNPETTPGGRALKFYSSVRLEVRKVDTLKQGSDMIGSRTRVKVVKNKVAPPFKVADFDIMYGEGISREGSLVDLAVDMGIVEKSGAWYSYKGDRLGQGRENVKEFLRNHPALAAEIESMIRGRTESARLAAAAAPAAGDGE.

Residue 68-75 (GPESSGKT) coordinates ATP.

It belongs to the RecA family.

The protein localises to the cytoplasm. Can catalyze the hydrolysis of ATP in the presence of single-stranded DNA, the ATP-dependent uptake of single-stranded DNA by duplex DNA, and the ATP-dependent hybridization of homologous single-stranded DNAs. It interacts with LexA causing its activation and leading to its autocatalytic cleavage. The chain is Protein RecA from Heliobacterium modesticaldum (strain ATCC 51547 / Ice1).